A 441-amino-acid polypeptide reads, in one-letter code: Glutamate-1-semialdehyde 2,1-aminomutase (441 aa).

At Lys-276 the chain carries N6-(pyridoxal phosphate)lysine.

This sequence belongs to the class-III pyridoxal-phosphate-dependent aminotransferase family. HemL subfamily. Homodimer. Pyridoxal 5'-phosphate serves as cofactor.

It localises to the cytoplasm. The catalysed reaction is (S)-4-amino-5-oxopentanoate = 5-aminolevulinate. It participates in porphyrin-containing compound metabolism; protoporphyrin-IX biosynthesis; 5-aminolevulinate from L-glutamyl-tRNA(Glu): step 2/2. This is Glutamate-1-semialdehyde 2,1-aminomutase from Rhodococcus jostii (strain RHA1).